A 336-amino-acid polypeptide reads, in one-letter code: E3 ubiquitin-protein ligase RING2 (336 aa).

Serine 2 bears the N-acetylserine mark. Residues serine 2 to cysteine 179 are interaction with HIP2. Serine 41 carries the post-translational modification Phosphoserine. The RING-type zinc-finger motif lies at cysteine 51–arginine 91. An interaction with nucleosomes via an acidic patch on histone H2A and histone H2B region spans residues lysine 93–arginine 98. A Glycyl lysine isopeptide (Lys-Gly) (interchain with G-Cter in ubiquitin) cross-link involves residue lysine 112. 2 positions are modified to phosphoserine: serine 143 and serine 168. A disordered region spans residues glutamine 157–alanine 213. The segment covering serine 176–glycine 191 has biased composition (polar residues). Residues lysine 249 and lysine 323 each participate in a glycyl lysine isopeptide (Lys-Gly) (interchain with G-Cter in SUMO2) cross-link.

Component of chromatin-associated Polycomb (PcG) complexes. Component of a number of PRC1-like complexes; these complexes contain either the polycomb group ring finger protein PCGF1, or PCGF2, or PCGF3, or BMI1, or PCGF5, or PCGF6. Distinct PRC1-like complexes are composed of a RING1 subunit (RING1B or RING1A), one of the six PCGF proteins (PCGF1, PCGF2, PCGF3, BMI1, PCGF5 or PCGF6), one PHC protein (PHC1, PHC2 or PHC3) and one of the CBX proteins (CBX2, CBX4, CBX6, CBX7 or CBX8). Part of a complex that contains RNF2, UB2D3 and BMI1; within that complex RNF2 and BMI1 form a tight heterodimer, where UB2D3 interacts only with RNF2. The complex composed of RNF2, UB2D3 and BMI1 binds nucleosomes, and has activity only with nucleosomal histone H2A. Part of a complex that contains PCGF5, RNF2 and UBE2D3. Part of a complex that contains AUTS2, PCGF5, RNF2, CSNK2B and RYBP. Interacts with CBX6 and CBX8. Interacts with PHC1, PCGF2, RYBP, CBX7, CBX4, CBX2, RNF1/RING1, BMI1 and PHC2. Interaction with RYBP and CBX7 is mutually exclusive; both compete for the same binding site on RNF2. Component of repressive BCOR complex containing a Polycomb group subcomplex at least composed of RYBP, PCGF1, BCOR and RING1. Interacts with CBX2 and PHC1. Interacts with CHTOP. Interacts with AURKB. Part of the E2F6.com-1 complex in G0 phase composed of E2F6, MGA, MAX, TFDP1, CBX3, BAT8, EUHMTASE1, RNF1/RING1, RNF2/RING2, MBLR, L3MBTL2 and YAF2. Component of some MLL1/MLL complex, at least composed of the core components KMT2A/MLL1, ASH2L, HCFC1/HCF1, WDR5 and RBBP5, as well as the facultative components BACC1, CHD8, E2F6, HSP70, INO80C, KANSL1, LAS1L, MAX, MCRS1, MGA, MYST1/MOF, PELP1, PHF20, PRP31, RING2, RUVB1/TIP49A, RUVB2/TIP49B, SENP3, TAF1, TAF4, TAF6, TAF7, TAF9 and TEX10. Interacts with RYBP, HIP2 and TFCP2. Interacts with NUPR1. Interacts with SAMD7 in a PHC2-dependent manner. In terms of processing, monoubiquitinated, by auto-ubiquitination. Polyubiquitinated in the presence of UBE2D3 (in vitro).

It is found in the nucleus. Its subcellular location is the cytoplasm. The protein resides in the chromosome. It carries out the reaction S-ubiquitinyl-[E2 ubiquitin-conjugating enzyme]-L-cysteine + [acceptor protein]-L-lysine = [E2 ubiquitin-conjugating enzyme]-L-cysteine + N(6)-ubiquitinyl-[acceptor protein]-L-lysine.. It participates in protein modification; protein ubiquitination. In terms of biological role, E3 ubiquitin-protein ligase that mediates monoubiquitination of 'Lys-119' of histone H2A (H2AK119Ub), thereby playing a central role in histone code and gene regulation. H2AK119Ub gives a specific tag for epigenetic transcriptional repression and participates in X chromosome inactivation of female mammals. May be involved in the initiation of both imprinted and random X inactivation. Essential component of a Polycomb group (PcG) multiprotein PRC1-like complex, a complex class required to maintain the transcriptionally repressive state of many genes, including Hox genes, throughout development. PcG PRC1 complex acts via chromatin remodeling and modification of histones, rendering chromatin heritably changed in its expressibility. E3 ubiquitin-protein ligase activity is enhanced by BMI1/PCGF4. Acts as the main E3 ubiquitin ligase on histone H2A of the PRC1 complex, while RING1 may rather act as a modulator of RNF2/RING2 activity. Plays a role in the transcriptional repression of genes that are required for pluripotency in embryonic stem cells, thereby contributing to differentiation of the ectodermal and endodermal germ layers. Association with the chromosomal DNA is cell-cycle dependent. In resting B- and T-lymphocytes, interaction with AURKB leads to block its activity, thereby maintaining transcription in resting lymphocytes. Also acts as a negative regulator of autophagy by mediating ubiquitination of AMBRA1, leading to its subsequent degradation. The sequence is that of E3 ubiquitin-protein ligase RING2 (RNF2) from Pongo abelii (Sumatran orangutan).